A 203-amino-acid polypeptide reads, in one-letter code: dITP/XTP pyrophosphatase (203 aa).

8 to 13 (TANKGK) contacts substrate. Mg(2+)-binding residues include E41 and D70. D70 serves as the catalytic Proton acceptor. Residues S71, 153–156 (FGYD), K176, and 181–182 (HR) each bind substrate.

The protein belongs to the HAM1 NTPase family. As to quaternary structure, homodimer. Mg(2+) serves as cofactor.

The enzyme catalyses XTP + H2O = XMP + diphosphate + H(+). It carries out the reaction dITP + H2O = dIMP + diphosphate + H(+). It catalyses the reaction ITP + H2O = IMP + diphosphate + H(+). Functionally, pyrophosphatase that catalyzes the hydrolysis of nucleoside triphosphates to their monophosphate derivatives, with a high preference for the non-canonical purine nucleotides XTP (xanthosine triphosphate), dITP (deoxyinosine triphosphate) and ITP. Seems to function as a house-cleaning enzyme that removes non-canonical purine nucleotides from the nucleotide pool, thus preventing their incorporation into DNA/RNA and avoiding chromosomal lesions. In Listeria innocua serovar 6a (strain ATCC BAA-680 / CLIP 11262), this protein is dITP/XTP pyrophosphatase.